We begin with the raw amino-acid sequence, 155 residues long: Cytochrome c-type biogenesis protein CcmE (155 aa).

The Cytoplasmic portion of the chain corresponds to 1-8 (MNPVRKRR). Residues 9–29 (LFIVLAILAGVGAAVALALSA) traverse the membrane as a helical; Signal-anchor for type II membrane protein segment. Residues 30–155 (LQQNINLFYT…YENGKPGGAQ (126 aa)) lie on the Periplasmic side of the membrane. Heme is bound by residues His124 and Tyr128.

Belongs to the CcmE/CycJ family.

The protein localises to the cell inner membrane. Functionally, heme chaperone required for the biogenesis of c-type cytochromes. Transiently binds heme delivered by CcmC and transfers the heme to apo-cytochromes in a process facilitated by CcmF and CcmH. The polypeptide is Cytochrome c-type biogenesis protein CcmE (Azotobacter vinelandii (strain DJ / ATCC BAA-1303)).